We begin with the raw amino-acid sequence, 80 residues long: U4-theraphotoxin-Spl1a (80 aa).

The signal sequence occupies residues 1 to 21; it reads MKASLFAVIFGLVVLCACSFA. Positions 22–50 are excised as a propeptide; sequence EDQFASPNELLKSMFVESTHELTPEVEGR. 3 disulfides stabilise this stretch: cysteine 52/cysteine 66, cysteine 59/cysteine 71, and cysteine 65/cysteine 75. Leucine 79 carries the leucine amide modification.

This sequence belongs to the neurotoxin 30 (phrixotoxin) family. Expressed by the venom gland.

It is found in the secreted. Probable ion channel inhibitor. Shows insecticidal activity when injected into mealworms. This chain is U4-theraphotoxin-Spl1a, found in Selenotypus plumipes (Australian featherleg tarantula).